The chain runs to 24 residues: Xenoposin precursor fragment B2 (24 aa).

As to expression, expressed by the skin glands.

It localises to the secreted. Has antimicrobial activity against Gram-negative bacterium E.coli ATCC 25922 (MIC=100 uM), Gram-positive bacterium S.auerus ATCC 25923 (MIC=25 uM). The polypeptide is Xenoposin precursor fragment B2 (Xenopus borealis (Kenyan clawed frog)).